We begin with the raw amino-acid sequence, 64 residues long: Large ribosomal subunit protein bL28 (64 aa).

Belongs to the bacterial ribosomal protein bL28 family.

The polypeptide is Large ribosomal subunit protein bL28 (rpmB) (Mycobacterium leprae (strain TN)).